The following is a 288-amino-acid chain: MWMRVNRMLGNVSVRQFSNVRLVAQEYSMRVQQARNRIVPKSLTFYSANPLHEEKISRLESLLKKYALPSSQKLPGADISAEENLKQNPRPSWISFSDYALIGGGTRLKPRHYEHFIQLLNKLNNIDPQLVNTEIKNELSKYIKKSSIQSQKTQQKELDEFGRSVAIGKRKAATAKVYLVRGEGKILVNGRQLNDYFLKMKDRESIAYPLQVVDSLGKYNVFATCRGGGPTGQAEAIMHAIAKALLVFNPLLKPRLRKAGVITRDYRHVERKKPGKKKARKMPTWVKR.

The segment at 269–288 is disordered; the sequence is VERKKPGKKKARKMPTWVKR.

The protein belongs to the universal ribosomal protein uS9 family.

It is found in the mitochondrion. This Candida glabrata (strain ATCC 2001 / BCRC 20586 / JCM 3761 / NBRC 0622 / NRRL Y-65 / CBS 138) (Yeast) protein is Small ribosomal subunit protein uS9m (MRPS9).